Here is a 155-residue protein sequence, read N- to C-terminus: Endoribonuclease YbeY (155 aa).

Residues histidine 114, histidine 118, and histidine 124 each coordinate Zn(2+).

It belongs to the endoribonuclease YbeY family. Requires Zn(2+) as cofactor.

The protein resides in the cytoplasm. Functionally, single strand-specific metallo-endoribonuclease involved in late-stage 70S ribosome quality control and in maturation of the 3' terminus of the 16S rRNA. The chain is Endoribonuclease YbeY from Salmonella arizonae (strain ATCC BAA-731 / CDC346-86 / RSK2980).